The sequence spans 304 residues: Opsin-1 (304 aa).

At 1–45 (MIHPEQVADMLRPTTSTTSSHVPGPVPTVVPTPTEYQTLGETGHR) the chain is on the extracellular side. The helical transmembrane segment at 46 to 66 (TLWVTFALMVLSSGIFALLSW) threads the bilayer. A helical membrane pass occupies residues 74–94 (LFHVITTLITVVASLSYFAMA). A helical transmembrane segment spans residues 129 to 149 (YVDWALTTPLLLLELCLLAGV). The helical transmembrane segment at 154–174 (TLMAIVADVIMVLCGLFAALG) threads the bilayer. The helical transmembrane segment at 183-203 (WGWYTIGCFSYLFVIWHVALH) threads the bilayer. A helical membrane pass occupies residues 219-239 (FTGLAVFALLLWTAYPIIWGI). Residues 252-272 (ILIYTVLDLLAKPVFGFWLLL) traverse the membrane as a helical segment. Lysine 263 is subject to N6-(retinylidene)lysine. Residues 273–304 (SHRAMPETNIDLPGYWSHGLATEGRIRIGEED) are Cytoplasmic-facing.

This sequence belongs to the archaeal/bacterial/fungal opsin family. Binds all-trans retinal via a protonated Schiff base linkage.

The protein localises to the membrane. Its function is as follows. Could facilitate a sensory photoresponse. This is Opsin-1 (nop-1) from Neurospora crassa (strain ATCC 24698 / 74-OR23-1A / CBS 708.71 / DSM 1257 / FGSC 987).